The chain runs to 804 residues: Phenylalanine--tRNA ligase beta subunit (804 aa).

The region spanning 40 to 155 is the tRNA-binding domain; the sequence is GEGIKGVVIG…GDAETGADAL (116 aa). The B5 domain occupies 409–484; that stretch reads IKENVIRLSV…RLYGYDNIPS (76 aa). Positions 462, 468, 471, and 472 each coordinate Mg(2+). The FDX-ACB domain occupies 710 to 803; the sequence is PKYPSVTRDI…LEDKYQAVLR (94 aa).

The protein belongs to the phenylalanyl-tRNA synthetase beta subunit family. Type 1 subfamily. Tetramer of two alpha and two beta subunits. Mg(2+) serves as cofactor.

The protein localises to the cytoplasm. The enzyme catalyses tRNA(Phe) + L-phenylalanine + ATP = L-phenylalanyl-tRNA(Phe) + AMP + diphosphate + H(+). This Bacillus licheniformis (strain ATCC 14580 / DSM 13 / JCM 2505 / CCUG 7422 / NBRC 12200 / NCIMB 9375 / NCTC 10341 / NRRL NRS-1264 / Gibson 46) protein is Phenylalanine--tRNA ligase beta subunit.